The sequence spans 470 residues: Maturase K (470 aa).

The protein belongs to the intron maturase 2 family. MatK subfamily.

It localises to the plastid. The protein resides in the chloroplast. Functionally, usually encoded in the trnK tRNA gene intron. Probably assists in splicing its own and other chloroplast group II introns. This Nypa fruticans (Nypa palm) protein is Maturase K.